The chain runs to 542 residues: Chaperonin GroEL 2 (542 aa).

Residues 29 to 32 (TLGP), 86 to 90 (DGTTT), glycine 413, 477 to 479 (NAA), and aspartate 493 contribute to the ATP site.

The protein belongs to the chaperonin (HSP60) family. In terms of assembly, forms a cylinder of 14 subunits composed of two heptameric rings stacked back-to-back. Interacts with the co-chaperonin GroES.

It is found in the cytoplasm. The enzyme catalyses ATP + H2O + a folded polypeptide = ADP + phosphate + an unfolded polypeptide.. Functionally, together with its co-chaperonin GroES, plays an essential role in assisting protein folding. The GroEL-GroES system forms a nano-cage that allows encapsulation of the non-native substrate proteins and provides a physical environment optimized to promote and accelerate protein folding. This Kineococcus radiotolerans (strain ATCC BAA-149 / DSM 14245 / SRS30216) protein is Chaperonin GroEL 2.